A 2995-amino-acid polypeptide reads, in one-letter code: Striated muscle preferentially expressed protein kinase (2995 aa).

The 83-residue stretch at 27-109 (PPVFLRKLKW…GEARTSAVLA (83 aa)) folds into the Ig-like 1 domain. A disulfide bond links cysteine 50 and cysteine 93. Disordered stretches follow at residues 250–272 (ITGS…KVSQ) and 384–467 (LTQT…NSKP). Residues 384–404 (LTQTDKQSSVSTESVPTQVIQ) are compositionally biased toward polar residues. The span at 454 to 464 (PPEMNENQENN) shows a compositional bias: low complexity. Ig-like domains follow at residues 613-701 (PAES…EELI) and 714-802 (PLFT…AELY). A disulfide bridge connects residues cysteine 639 and cysteine 691. The interval 815-834 (SRLEKMPSIPEEPEVPEGEV) is disordered. One can recognise an Ig-like 4 domain in the interval 840–930 (PDFIKPLSDL…AACYAHLYVA (91 aa)). Cysteine 861 and cysteine 912 are disulfide-bonded. The Fibronectin type-III 1 domain maps to 937–1035 (PDGPPVIESV…TDLVQLVDRG (99 aa)). Positions 1135-1224 (PPIFETIMED…GSVSCKAELT (90 aa)) constitute an Ig-like 5 domain. Residues 1255–1505 (YDIHKEIGRG…ATECLLHPWF (251 aa)) enclose the Protein kinase 1 domain. ATP-binding positions include 1261-1269 (IGRGAFSYV) and lysine 1283. Catalysis depends on aspartate 1372, which acts as the Proton acceptor. Disordered regions lie at residues 1559-1582 (VPRN…DIDE), 1776-1839 (RNFR…STGD), 2017-2058 (LKRL…TGLK), 2163-2189 (VHSR…VEKQ), 2211-2254 (SGIS…KMDI), and 2268-2322 (SKET…KEDF). The segment covering 1786–1795 (SGDSGTFNND) has biased composition (polar residues). Residues 2274–2284 (SSSSAHSIESS) are compositionally biased toward low complexity. The segment covering 2289 to 2299 (TEIRSRWDRWG) has biased composition (basic and acidic residues). The region spanning 2323-2413 (PPVFHIALKD…ASVTTSCILT (91 aa)) is the Ig-like 6 domain. A disulfide bridge connects residues cysteine 2345 and cysteine 2397. The Fibronectin type-III 2 domain occupies 2420-2513 (CPGTPEIRQI…DGVSIDTKVT (94 aa)). Disordered regions lie at residues 2574–2609 (PKMS…YTAP) and 2648–2676 (GEGA…LRQG). Polar residues-rich tracts occupy residues 2587-2605 (SSVN…SPRS) and 2652-2674 (SSPT…TTLR). The Protein kinase 2 domain occupies 2682 to 2934 (YSFLDEKARG…IKDCLNHSWL (253 aa)). ATP contacts are provided by residues 2688–2696 (KARGRFGVI) and lysine 2711. Aspartate 2801 functions as the Proton acceptor in the catalytic mechanism.

The protein belongs to the protein kinase superfamily. CAMK Ser/Thr protein kinase family. In terms of processing, may be autophosphorylated. Preferentially expressed in striated muscle.

It is found in the nucleus. It carries out the reaction L-seryl-[protein] + ATP = O-phospho-L-seryl-[protein] + ADP + H(+). The catalysed reaction is L-threonyl-[protein] + ATP = O-phospho-L-threonyl-[protein] + ADP + H(+). The protein is Striated muscle preferentially expressed protein kinase (speg) of Danio rerio (Zebrafish).